Consider the following 101-residue polypeptide: Large ribosomal subunit protein uL24 (101 aa).

Belongs to the universal ribosomal protein uL24 family. As to quaternary structure, part of the 50S ribosomal subunit.

In terms of biological role, one of two assembly initiator proteins, it binds directly to the 5'-end of the 23S rRNA, where it nucleates assembly of the 50S subunit. Its function is as follows. One of the proteins that surrounds the polypeptide exit tunnel on the outside of the subunit. The polypeptide is Large ribosomal subunit protein uL24 (Borreliella afzelii (strain PKo) (Borrelia afzelii)).